A 207-amino-acid polypeptide reads, in one-letter code: Cytochrome c biogenesis ATP-binding export protein CcmA (207 aa).

One can recognise an ABC transporter domain in the interval 2 to 204 (LECENLSCTR…TTIDIRNFNR (203 aa)). 34–41 (GPNGSGKT) lines the ATP pocket.

This sequence belongs to the ABC transporter superfamily. CcmA exporter (TC 3.A.1.107) family. The complex is composed of two ATP-binding proteins (CcmA) and two transmembrane proteins (CcmB).

It localises to the cell membrane. The catalysed reaction is heme b(in) + ATP + H2O = heme b(out) + ADP + phosphate + H(+). In terms of biological role, part of the ABC transporter complex CcmAB involved in the biogenesis of c-type cytochromes; once thought to export heme, this seems not to be the case, but its exact role is uncertain. Responsible for energy coupling to the transport system. This is Cytochrome c biogenesis ATP-binding export protein CcmA from Wolbachia pipientis wMel.